We begin with the raw amino-acid sequence, 262 residues long: Biotin carboxyl carrier protein of acetyl-CoA carboxylase, chloroplastic (262 aa).

A chloroplast-targeting transit peptide spans 1–47 (MASSLAPATKAATNLRLTHSLRFSPKPNNLRFATKPGNTLLCTRVKA). Disordered regions lie at residues 53–84 (ALDS…PSSS) and 125–185 (IRKK…KSSL). Residues 132–160 (PQPPPAPQPSVVYSPPPPALPPPPVPAST) are compositionally biased toward pro residues. A compositionally biased stretch (low complexity) spans 161–185 (PAPTLARATPTPTSAPAVKSAKSSL). One can recognise a Biotinyl-binding domain in the interval 185–261 (LPPLKSPMAG…SVDTPLFVIQ (77 aa)). At K227 the chain carries N6-biotinyllysine.

It is found in the plastid. It localises to the chloroplast. It participates in lipid metabolism; fatty acid biosynthesis. In terms of biological role, this protein is a component of the acetyl coenzyme A carboxylase complex; first, biotin carboxylase catalyzes the carboxylation of the carrier protein and then the transcarboxylase transfers the carboxyl group to form malonyl-CoA. The polypeptide is Biotin carboxyl carrier protein of acetyl-CoA carboxylase, chloroplastic (ACCB-1) (Glycine max (Soybean)).